The sequence spans 239 residues: Probable replication-associated protein repA2 (239 aa).

This sequence belongs to the IncFII RepA family.

Its function is as follows. This protein is essential for plasmid replication; it is involved in copy control functions. In Buchnera aphidicola subsp. Baizongia pistaciae (strain Bp), this protein is Probable replication-associated protein repA2 (repA2).